Consider the following 335-residue polypeptide: tRNA N6-adenosine threonylcarbamoyltransferase (335 aa).

Fe cation is bound by residues histidine 111 and histidine 115. Residues 133 to 137 (LISGG), aspartate 166, glycine 179, and asparagine 276 each bind substrate. Aspartate 301 serves as a coordination point for Fe cation.

Belongs to the KAE1 / TsaD family. The cofactor is Fe(2+).

It localises to the cytoplasm. It catalyses the reaction L-threonylcarbamoyladenylate + adenosine(37) in tRNA = N(6)-L-threonylcarbamoyladenosine(37) in tRNA + AMP + H(+). In terms of biological role, required for the formation of a threonylcarbamoyl group on adenosine at position 37 (t(6)A37) in tRNAs that read codons beginning with adenine. Is involved in the transfer of the threonylcarbamoyl moiety of threonylcarbamoyl-AMP (TC-AMP) to the N6 group of A37, together with TsaE and TsaB. TsaD likely plays a direct catalytic role in this reaction. The sequence is that of tRNA N6-adenosine threonylcarbamoyltransferase from Wolbachia sp. subsp. Drosophila simulans (strain wRi).